Reading from the N-terminus, the 565-residue chain is MPPKAADGRRPSPDGGLGGFVPFPADRAASYRAAGYWSGRTLDTVLSDAARRWPDRLAVADAGDRPGHGGLSYAELDQRADRAAAALHGLGITPGDRVLLQLPNGCQFAVALFALLRAGAIPVMCLPGHRAAELGHFAAVSAATGLVVADVASGFDYRPMARELVADHPTLRHVIVDGDPGPFVSWAQLCAQAGTGSPAPPADPGSPALLLVSGGTTGMPKLIPRTHDDYVFNATASAALCRLSADDVYLVVLAAGHNFPLACPGLLGAMTVGATAVFAPDPSPEAAFAAIERHGVTVTALVPALAKLWAQSCEWEPVTPKSLRLLQVGGSKLEPEDARRVRTALTPGLQQVFGMAEGLLNFTRIGDPPEVVEHTQGRPLCPADELRIVNADGEPVGPGEEGELLVRGPYTLNGYFAAERDNERCFDPDGFYRSGDLVRRRDDGNLVVTGRVKDVICRAGETIAASDLEEQLLSHPAIFSAAAVGLPDQYLGEKICAAVVFAGAPITLAELNGYLDRRGVAAHTRPDQLVAMPALPTTPIGKIDKRAIVRQLGIATGPVTTQRCH.

ATP is bound by residues glycine 214, glycine 330, valine 352, aspartate 436, arginine 451, and lysine 542.

It belongs to the ATP-dependent AMP-binding enzyme family.

It carries out the reaction salicylate + ATP + H(+) = 2-hydroxybenzoyl-5'-AMP + diphosphate. The catalysed reaction is 2-hydroxybenzoyl-5'-AMP + holo-[ACP] = salicyl-[ACP] + AMP + H(+). Its pathway is siderophore biosynthesis; mycobactin biosynthesis. With respect to regulation, inhibited by salicyl-AMS, an acyl-AMP analog. Also inhibited by 5'-O-[(N-acyl)sulfamoyl]adenosines. Its function is as follows. Involved in the initial steps of the mycobactin biosynthetic pathway. Catalyzes the salicylation of the aryl carrier protein (ArCP) domain of MbtB through a two-step reaction. The first step is the ATP-dependent adenylation of salicylate to generate a salicyl-AMP intermediate. The second step is the transfer of this activated salicylate to MbtB to form a salicyl-ArCP domain thioester. The protein is Salicyl-AMP ligase / salicyl-S-ArCP synthetase of Mycobacterium tuberculosis (strain ATCC 25618 / H37Rv).